The following is a 504-amino-acid chain: Lysine--tRNA ligase (504 aa).

Positions 411 and 418 each coordinate Mg(2+).

The protein belongs to the class-II aminoacyl-tRNA synthetase family. As to quaternary structure, homodimer. Mg(2+) is required as a cofactor.

It is found in the cytoplasm. It catalyses the reaction tRNA(Lys) + L-lysine + ATP = L-lysyl-tRNA(Lys) + AMP + diphosphate. The chain is Lysine--tRNA ligase from Clostridium botulinum (strain Loch Maree / Type A3).